The chain runs to 147 residues: Nucleoside diphosphate kinase (147 aa).

ATP contacts are provided by K9, F57, R85, T91, R102, and N112. H115 acts as the Pros-phosphohistidine intermediate in catalysis.

This sequence belongs to the NDK family. Requires Mg(2+) as cofactor.

Its subcellular location is the cytoplasm. It carries out the reaction a 2'-deoxyribonucleoside 5'-diphosphate + ATP = a 2'-deoxyribonucleoside 5'-triphosphate + ADP. The catalysed reaction is a ribonucleoside 5'-diphosphate + ATP = a ribonucleoside 5'-triphosphate + ADP. Its function is as follows. Major role in the synthesis of nucleoside triphosphates other than ATP. The ATP gamma phosphate is transferred to the NDP beta phosphate via a ping-pong mechanism, using a phosphorylated active-site intermediate. The polypeptide is Nucleoside diphosphate kinase (Ignicoccus hospitalis (strain KIN4/I / DSM 18386 / JCM 14125)).